We begin with the raw amino-acid sequence, 288 residues long: Polyprenyl transferase eriF (288 aa).

A run of 6 helical transmembrane segments spans residues 24-44 (ASII…TLPL), 51-71 (YIFL…LNQV), 101-121 (IAAF…LPET), 145-165 (CIAM…AISP), 215-235 (FIIT…GGIF), and 268-288 (FYTY…HGLI).

It belongs to the UbiA prenyltransferase family. Mg(2+) serves as cofactor.

The protein localises to the membrane. In terms of biological role, polyprenyl transferase; part of the gene cluster that mediates the biosynthesis of erinacines, cyathane-xylosides that show unique biological activities, including leishmanicidal activity, stimulating activity for nerve growth-factor synthesis, and agonistic activity toward the kappa opioid receptor. The role of eriF within the pathway has still to be determined. The first step of the erinacines biosynthesis pathway is catalyzed by the geranylgeranyl diphosphate (GGPP) synthase eriE via conversion of farnesyl pyrophosphate and isopentyl pyrophosphate into geranylgeranyl pyrophosphate (GGPP). GGPP is then substrate of the diterpene cyclase eriG for the production of cyatha-3,12-diene. The cytochrome P450 monooxygenase eriI then hydroxylates cyatha-3,12-diene at C-14 of the seven-membered ring to produce erinacol, which is further hydroxylated at C-15 by the cytochrome P450 monooxygenase eriC to yield cyathadiol. The cytochrome P450 monooxygenase eriA then catalyzes C-11 hydroxylation in the presence of the short chain dehydrogenase/reductase (SDR) eriH, which leads to the production of cyathatriol. The acetyltransferase eriL converts cyathatriol into 11-O-acetyl-cyathatriol. The SDR eriH catalyzes further oxidation of 11-O-acetyl-cyathatriol into 1-O-acetylcyathin A3. Finally, the glycosyl transferase eriJ tranfers xylose from UDP-xylose onto C-14 of 11-O-acetyl-cyathatriol to form eracine Q. EriJ is also able to convert 11-O-acetyl-cyathatriol to eracine Q2 by using UDP-D-glucose as cosubstrate, but at a lower rate. This is Polyprenyl transferase eriF from Hericium erinaceus (Lion's mane mushroom).